The primary structure comprises 440 residues: Actin-like protein 7A (440 aa).

The segment at 1–29 is disordered; the sequence is MSLDGVWAPQTANIGDGPAKKASDQASMQ. Positions 36 to 56 are required for interaction with TES; sequence ASLKDGPAKRAVWVRRDNAET.

Belongs to the actin family. Interacts (via N-terminus) with TES (via LIM domain 2). Heterodimer with TES; the heterodimer interacts with ENAH to form a heterotrimer. Interacts with ACTL9. Interacts with CYLC1; the interaction may be relevant for proper acrosome attachment to the nuclear envelope. Detected in testis. Detected at the acrosome of round spermatids (at protein level). Detected in adult and embryonic testis. Detected in developing male germ cells.

The protein localises to the cytoplasm. It is found in the cytoskeleton. It localises to the golgi apparatus. The protein resides in the nucleus. Its subcellular location is the cytoplasmic vesicle. The protein localises to the secretory vesicle. It is found in the acrosome. Functionally, essential for normal spermatogenesis and male fertility. Required for normal sperm head morphology, acroplaxome formation, acrosome attachment, and acrosome granule stability. May anchor and stabilize acrosomal adherence to the acroplaxome at least in part by facilitating the presence of F-actin in the subacrosomal space. May play an important role in formation and fusion of Golgi-derived vesicles during acrosome biogenesis. This is Actin-like protein 7A (Actl7a) from Mus musculus (Mouse).